Reading from the N-terminus, the 2995-residue chain is Striated muscle preferentially expressed protein kinase (2995 aa).

Residues 27-109 (PPVFLRKLKW…GEARTSAVLA (83 aa)) enclose the Ig-like 1 domain. Cys50 and Cys93 are oxidised to a cystine. Disordered stretches follow at residues 250-272 (ITGS…KVSQ) and 384-467 (LTQT…NSKP). Residues 384 to 404 (LTQTDKQSSVSTESVPTQVIQ) show a composition bias toward polar residues. Low complexity predominate over residues 454-464 (PPEMNENQENN). Ig-like domains lie at 613–701 (PAES…EELI) and 714–802 (PLFT…AELY). Cys639 and Cys691 are joined by a disulfide. Residues 815-834 (SRLEKMPSIPEEPEVPEGEV) are disordered. In terms of domain architecture, Ig-like 4 spans 840–930 (PDFIKPLSDL…AACYAHLYVA (91 aa)). Cysteines 861 and 912 form a disulfide. A Fibronectin type-III 1 domain is found at 937–1035 (PDGPPVIESV…TDLVQLVDRG (99 aa)). The Ig-like 5 domain occupies 1135-1224 (PPIFETIMED…GSVSCKAELT (90 aa)). Residues 1255–1505 (YDIHKEIGRG…ATECLLHPWF (251 aa)) enclose the Protein kinase 1 domain. Residues 1261–1269 (IGRGAFSYV) and Lys1283 each bind ATP. The active-site Proton acceptor is Asp1372. Disordered regions lie at residues 1559–1582 (VPRN…DIDE), 1776–1839 (RNFR…STGD), 2017–2058 (LKRL…TGLK), 2163–2189 (VHSR…VEKQ), 2211–2254 (SGIS…KMDI), and 2268–2322 (SKET…KEDF). Residues 1786–1795 (SGDSGTFNND) are compositionally biased toward polar residues. Over residues 2274 to 2284 (SSSSAHSIESS) the composition is skewed to low complexity. Over residues 2289–2299 (TEIRSRWDRWG) the composition is skewed to basic and acidic residues. The region spanning 2323 to 2413 (PPVFHIALKD…ASVTTSCILT (91 aa)) is the Ig-like 6 domain. Cys2345 and Cys2397 are joined by a disulfide. The Fibronectin type-III 2 domain maps to 2420–2513 (CPGTPEIRQI…DGVSIDTKVT (94 aa)). 2 disordered regions span residues 2574 to 2609 (PKMS…YTAP) and 2648 to 2676 (GEGA…LRQG). Composition is skewed to polar residues over residues 2587 to 2605 (SSVN…SPRS) and 2652 to 2674 (SSPT…TTLR). Residues 2682–2934 (YSFLDEKARG…IKDCLNHSWL (253 aa)) enclose the Protein kinase 2 domain. ATP-binding positions include 2688 to 2696 (KARGRFGVI) and Lys2711. Asp2801 functions as the Proton acceptor in the catalytic mechanism.

This sequence belongs to the protein kinase superfamily. CAMK Ser/Thr protein kinase family. In terms of processing, may be autophosphorylated. In terms of tissue distribution, preferentially expressed in striated muscle.

It is found in the nucleus. The enzyme catalyses L-seryl-[protein] + ATP = O-phospho-L-seryl-[protein] + ADP + H(+). The catalysed reaction is L-threonyl-[protein] + ATP = O-phospho-L-threonyl-[protein] + ADP + H(+). This Danio rerio (Zebrafish) protein is Striated muscle preferentially expressed protein kinase (speg).